We begin with the raw amino-acid sequence, 1736 residues long: Hybrid signal transduction histidine kinase I (1736 aa).

The span at histidine 143 to asparagine 161 shows a compositional bias: low complexity. The tract at residues histidine 143–serine 171 is disordered. The PAC domain maps to phenylalanine 234 to glutamate 286. In terms of domain architecture, PAS spans glutamate 287–proline 358. Residues threonine 378–threonine 469 form a disordered region. Low complexity predominate over residues serine 379–serine 389. Over residues proline 392–tyrosine 412 the composition is skewed to polar residues. The segment covering serine 413–threonine 469 has biased composition (low complexity). The Histidine kinase domain maps to asparagine 556–serine 908. Residue histidine 559 is modified to Phosphohistidine; by autocatalysis. Disordered stretches follow at residues asparagine 711 to lysine 821, threonine 952 to glycine 971, asparagine 1080 to serine 1124, proline 1157 to proline 1258, serine 1277 to glycine 1301, alanine 1330 to serine 1393, and serine 1419 to leucine 1520. Acidic residues-rich tracts occupy residues serine 725–asparagine 735 and glutamate 758–threonine 789. Composition is skewed to low complexity over residues serine 790–asparagine 807, aspartate 961–glycine 971, and asparagine 1080–isoleucine 1096. Positions glutamine 1097–lysine 1117 are enriched in polar residues. Low complexity-rich tracts occupy residues serine 1186–serine 1195 and threonine 1202–proline 1258. The span at alanine 1330–glycine 1339 shows a compositional bias: polar residues. Low complexity-rich tracts occupy residues tyrosine 1340 to glutamine 1376, asparagine 1425 to glutamate 1475, serine 1482 to serine 1492, and serine 1506 to leucine 1520. The 124-residue stretch at lysine 1551–isoleucine 1674 folds into the Response regulatory domain. At aspartate 1605 the chain carries 4-aspartylphosphate. Residues asparagine 1695 to isoleucine 1722 show a composition bias toward low complexity. The tract at residues asparagine 1695–isoleucine 1736 is disordered.

In terms of processing, activation probably requires transfer of a phosphate group between a histidine in the kinase core (transmitter) domain and an aspartate of the receiver domain.

It carries out the reaction ATP + protein L-histidine = ADP + protein N-phospho-L-histidine.. Acts as a receptor histidine kinase for a signal transduction pathway. This protein undergoes an ATP-dependent autophosphorylation at a conserved histidine residue in the kinase core, and a phosphoryl group is then transferred to a conserved aspartate residue in the receiver domain. This is Hybrid signal transduction histidine kinase I (dhkI-1) from Dictyostelium discoideum (Social amoeba).